Consider the following 253-residue polypeptide: Major prion protein (253 aa).

A signal peptide spans 1 to 22 (MANLGCWMLVLFVATWSDLGLC). The interaction with ADGRG6 stretch occupies residues 23–38 (KKRPKPGGWNTGGSRY). The interaction with GRB2, ERI3 and SYN1 stretch occupies residues 23 to 230 (KKRPKPGGWN…ESQAYYQRGS (208 aa)). The interval 26–108 (PKPGGWNTGG…WNKPSKPKTS (83 aa)) is disordered. 5 tandem repeats follow at residues 51-59 (PQGGGGWGQ), 60-67 (PHGGGWGQ), 68-75 (PHGGGWGQ), 76-83 (PHGGGWGQ), and 84-91 (PHGGGWGQ). The tract at residues 51–91 (PQGGGGWGQPHGGGWGQPHGGGWGQPHGGGWGQPHGGGWGQ) is 5 X 8 AA tandem repeats of P-H-G-G-G-W-G-Q. The span at 52 to 95 (QGGGGWGQPHGGGWGQPHGGGWGQPHGGGWGQPHGGGWGQGGGT) shows a compositional bias: gly residues. Cu(2+) is bound by residues H61, G62, G63, H69, G70, G71, H77, G78, G79, H85, G86, and G87. A disulfide bridge connects residues C179 and C214. N181 and N197 each carry an N-linked (GlcNAc...) asparagine glycan. S230 carries the GPI-anchor amidated serine lipid modification. A propeptide spans 231-253 (SMVLFSSPPVILLISFLIFLIVG) (removed in mature form).

The protein belongs to the prion family. As to quaternary structure, monomer and homodimer. Has a tendency to aggregate into amyloid fibrils containing a cross-beta spine, formed by a steric zipper of superposed beta-strands. Soluble oligomers may represent an intermediate stage on the path to fibril formation. Copper binding may promote oligomerization. Interacts with GRB2, APP, ERI3/PRNPIP and SYN1. Mislocalized cytosolically exposed PrP interacts with MGRN1; this interaction alters MGRN1 subcellular location and causes lysosomal enlargement. Interacts with APP. Interacts with KIAA1191. Interacts with ADGRG6.

The protein resides in the cell membrane. It is found in the golgi apparatus. In terms of biological role, its primary physiological function is unclear. May play a role in neuronal development and synaptic plasticity. May be required for neuronal myelin sheath maintenance. May promote myelin homeostasis through acting as an agonist for ADGRG6 receptor. May play a role in iron uptake and iron homeostasis. Soluble oligomers are toxic to cultured neuroblastoma cells and induce apoptosis (in vitro). Association with GPC1 (via its heparan sulfate chains) targets PRNP to lipid rafts. Also provides Cu(2+) or Zn(2+) for the ascorbate-mediated GPC1 deaminase degradation of its heparan sulfate side chains. The chain is Major prion protein (PRNP) from Colobus guereza (Mantled guereza).